The following is an 88-amino-acid chain: Elongation factor 1-beta (88 aa).

It belongs to the EF-1-beta/EF-1-delta family.

Functionally, promotes the exchange of GDP for GTP in EF-1-alpha/GDP, thus allowing the regeneration of EF-1-alpha/GTP that could then be used to form the ternary complex EF-1-alpha/GTP/AAtRNA. This Thermoplasma acidophilum (strain ATCC 25905 / DSM 1728 / JCM 9062 / NBRC 15155 / AMRC-C165) protein is Elongation factor 1-beta (ef1b).